Reading from the N-terminus, the 298-residue chain is N-acetylmuramic acid 6-phosphate etherase (298 aa).

The SIS domain occupies 55-218; it reads IHTQVSGGGR…STGLMIKSGK (164 aa). The active-site Proton donor is the E83. E114 is a catalytic residue.

This sequence belongs to the GCKR-like family. MurNAc-6-P etherase subfamily. As to quaternary structure, homodimer.

It catalyses the reaction N-acetyl-D-muramate 6-phosphate + H2O = N-acetyl-D-glucosamine 6-phosphate + (R)-lactate. Its pathway is amino-sugar metabolism; 1,6-anhydro-N-acetylmuramate degradation. It participates in amino-sugar metabolism; N-acetylmuramate degradation. It functions in the pathway cell wall biogenesis; peptidoglycan recycling. Specifically catalyzes the cleavage of the D-lactyl ether substituent of MurNAc 6-phosphate, producing GlcNAc 6-phosphate and D-lactate. Together with AnmK, is also required for the utilization of anhydro-N-acetylmuramic acid (anhMurNAc) either imported from the medium or derived from its own cell wall murein, and thus plays a role in cell wall recycling. The chain is N-acetylmuramic acid 6-phosphate etherase from Escherichia coli O6:K15:H31 (strain 536 / UPEC).